A 104-amino-acid polypeptide reads, in one-letter code: Replication factor A protein 3 (104 aa).

Belongs to the replication factor A protein 3 family. Component of the heterotrimeric canonical replication protein A complex (RPA).

Its subcellular location is the nucleus. In terms of biological role, as part of the replication protein A (RPA/RP-A), a single-stranded DNA-binding heterotrimeric complex, may play an essential role in DNA replication, recombination and repair. Binds and stabilizes single-stranded DNA intermediates, preventing complementary DNA reannealing and recruiting different proteins involved in DNA metabolism. The polypeptide is Replication factor A protein 3 (ssb3) (Schizosaccharomyces pombe (strain 972 / ATCC 24843) (Fission yeast)).